The primary structure comprises 203 residues: Large ribosomal subunit protein bL25 (203 aa).

The protein belongs to the bacterial ribosomal protein bL25 family. CTC subfamily. Part of the 50S ribosomal subunit; part of the 5S rRNA/L5/L18/L25 subcomplex. Contacts the 5S rRNA. Binds to the 5S rRNA independently of L5 and L18.

Its function is as follows. This is one of the proteins that binds to the 5S RNA in the ribosome where it forms part of the central protuberance. The protein is Large ribosomal subunit protein bL25 of Pseudomonas syringae pv. tomato (strain ATCC BAA-871 / DC3000).